The chain runs to 397 residues: MSIFKLMVIYFTLFWVVNAAQLLDLDSHGVIPGAYIVVMKNGVSSHQFSSHVRWLKRAHRRNLAKRVAPFTEGLSSTWDIAGWQAYSGSFDKDTIQEILNHENVEFVEPNREMKAASTIKQENITWGLARISHMENFSHDYVSTYGEGENLTFYGIDSGIDIHQSDFTGRARWGINVADHIDIDCIGHGTHTAGTVAGQSFGILKKASIVSVKVLDCYGHGDTTKYINGLNWAINDAKKRGLLGKSVMNISLGTGRSRAVNEATVRAQEAGIFISVAAGNNAINAEFLSPGSAPELCTVAASTRNDTRAYFSNYGALIDLFAPGEYIRSTLPHNRTGIMSGTSMAAPHVCGIGGLIMAAEGLAPEQVCRRLKELANPAIKYAGFNTTDKLLYNGSGA.

An N-terminal signal peptide occupies residues Met-1 to Ala-19. A propeptide spanning residues Ala-20–Ala-116 is cleaved from the precursor. The Inhibitor I9 domain maps to Tyr-35–Ala-115. Residues Asn-123, Asn-136, and Asn-150 are each glycosylated (N-linked (GlcNAc...) asparagine). Positions Thr-125–Ala-397 constitute a Peptidase S8 domain. Active-site charge relay system residues include Asp-157 and His-188. N-linked (GlcNAc...) asparagine glycans are attached at residues Asn-249, Asn-305, and Asn-334. Ser-343 acts as the Charge relay system in catalysis. Asn-385 and Asn-393 each carry an N-linked (GlcNAc...) asparagine glycan.

It belongs to the peptidase S8 family.

It localises to the secreted. Secreted subtilisin-like serine protease with keratinolytic activity that contributes to pathogenicity. In Arthroderma gypseum (strain ATCC MYA-4604 / CBS 118893) (Microsporum gypseum), this protein is Subtilisin-like protease 12 (SUB12).